Here is a 156-residue protein sequence, read N- to C-terminus: Eosinophil cationic protein 2 (156 aa).

Positions 1–25 (MGPKLLESRLCLLLLLGLVLMLASC) are cleaved as a signal peptide. His-38 serves as the catalytic Proton acceptor. 4 cysteine pairs are disulfide-bonded: Cys-47-Cys-106, Cys-61-Cys-119, Cys-79-Cys-134, and Cys-86-Cys-94. 62–66 (KGLNT) lines the substrate pocket. Residues Asn-89, Asn-96, and Asn-107 are each glycosylated (N-linked (GlcNAc...) asparagine). Residue His-151 is the Proton donor of the active site.

It belongs to the pancreatic ribonuclease family.

It localises to the cytoplasmic granule. Its function is as follows. Cytotoxin and helminthotoxin with ribonuclease activity. Selectively chemotactic for dendritic cells. Possesses a wide variety of biological activities. The chain is Eosinophil cationic protein 2 (Ear2) from Mus musculus (Mouse).